Here is a 299-residue protein sequence, read N- to C-terminus: MQLGVIGLGRMGRIVVDRVLDAGHEVVAFDLSAEAVAAAADAGAEPADSVADLVDRLGDDKRIWLMVPAGDAVDATLDDLDPHLDGDDVVVDGGNSHFEESVRRAEACSAAYLDCGTSGGPAGAELGFSLMVGGPQWAYDELTPVFDAVATGPDGHGHMGDSGSGHYVKMVHNGVEYALMQAYGEGFELLAEGRYDLDLESVAKTWNNGAVIRSWLLELCEEAFREEGSDLGDVDDHVAGGSTGTWTVQEALEQEVPVPLIYQSLAERFGSRADDRFSRRLANRLRYGFGRHEVARKDD.

Residues 7-12 (GLGRMG), 67-69 (VPA), and N95 contribute to the NAD(+) site. Positions 95, 118, and 120 each coordinate substrate. K169 functions as the Proton acceptor in the catalytic mechanism. 172–173 (HN) is a binding site for substrate. E176 serves as the catalytic Proton donor. Substrate-binding residues include Y177 and R268.

This sequence belongs to the 6-phosphogluconate dehydrogenase family. As to quaternary structure, homotetramer.

The enzyme catalyses 6-phospho-D-gluconate + NAD(+) = D-ribulose 5-phosphate + CO2 + NADH. It functions in the pathway carbohydrate degradation; pentose phosphate pathway. In terms of biological role, catalyzes the oxidative decarboxylation of 6-phosphogluconate to ribulose 5-phosphate and CO(2), with concomitant reduction of NAD to NADH. The polypeptide is 6-phosphogluconate dehydrogenase, NAD(+)-dependent, decarboxylating (Haloferax volcanii (strain ATCC 29605 / DSM 3757 / JCM 8879 / NBRC 14742 / NCIMB 2012 / VKM B-1768 / DS2) (Halobacterium volcanii)).